We begin with the raw amino-acid sequence, 558 residues long: MSKLFRRVVTVLALTSMASSFASGKIEAAAAESLATRFIASAENSDDNISQRKAKKVRFGRNKYQKQEQKNNGPYCDKEFYPCQDGSCQSSVDTKQEPCYGKMYCVRVSDDSNVEISQAVPEYATVGSPYPIEILAVGKRDCVNVVITQQLPCEVEFISSDPATTPTSDSKLIWTIDRLGQGERCKITVWVKPLKEGCCFTAATVCACPELRSYTKCGQPAICIKQEGPECACLRCPVCYKIEVTNTGSAIARGVVVDNPVPDGYSHPSGQRVLSFNLGDMRPGDTKCFTVEFCPQKRGKITNVATVSYCGGHKCSANVTTVINEPCVQVNISGNDWSYVCKPVEYTIVVSNPGDLKLYDVVIEDLIPSGITILEAPGAEICCNKAVWCIKEMCPGETLQFKVVAKAQTPGKFTNQVSVKTNSDCGSCTSCAEVTTHWKGLAATHMCVIDTNDPICVGENTVYRICVTNRGSAEDTNVSLILKFSKELQPVSSSGPTKGTITGNTVVFDALPKLGSKESVEFSVTLKGVAPGDARGEAILSSDTLTVPVADTENTHVY.

An N-terminal signal peptide occupies residues 1 to 22 (MSKLFRRVVTVLALTSMASSFA). A propeptide spanning residues 23–40 (SGKIEAAAAESLATRFIA) is cleaved from the precursor.

In terms of assembly, part of a disulfide cross-linked outer membrane complex (COMC) composed of the major outer membrane porin (MOMP), the small cysteine-rich protein (OmcA) and the large cysteine-rich periplasmic protein (OmcB).

It is found in the periplasm. In terms of biological role, in elementary bodies (EBs, the infectious stage, which is able to survive outside the host cell) provides the structural integrity of the outer envelope through disulfide cross-links with the small cysteine-rich protein and the major outer membrane porin. It has been described in publications as the Sarkosyl-insoluble COMC (Chlamydia outer membrane complex), and serves as the functional equivalent of peptidoglycan. It is present but the disulfide bonds are reduced in reticulate bodies (RBs). This is Large cysteine-rich periplasmic protein OmcB (omcB) from Chlamydia caviae (strain ATCC VR-813 / DSM 19441 / 03DC25 / GPIC) (Chlamydophila caviae).